The primary structure comprises 355 residues: MKNILDLTKEELQQEVTPKFRANQIYQWIYQKGAKDFESMSNLPKSMREELKEKFTITPPKILNVEVSKDGSKKYLLGLQDGHTVESVLLPMKKEERDEKGNILKEARYTVCVSSQVGCKVGCEFCLTAKGGFVRNLTPGEIVEQVLTIREDNNIPANRRVNIVYMGMGEPLDNLENVAKAVKIFSDEHGMSISPRRQTISTSGLAPKIKKLGEMNLGVLLAISLHAVDDELRQKLMPINKAYNIESVIQAVKEFPIDQRKRVMFEYLMIKNLNDDLKAAKKLVKLLHGIKAKVNLIYFNPYPGSPFQRPEPKDVEAFQKYLLDHGVLCTIRESKGLDISAACGQLKEKSHGCTL.

Catalysis depends on Glu86, which acts as the Proton acceptor. Positions 105 to 338 (KEARYTVCVS…CTIRESKGLD (234 aa)) constitute a Radical SAM core domain. The cysteines at positions 112 and 343 are disulfide-linked. Positions 119, 123, and 126 each coordinate [4Fe-4S] cluster. S-adenosyl-L-methionine is bound by residues 169–170 (GE), Ser201, 224–226 (SLH), and Asn300. Cys343 acts as the S-methylcysteine intermediate in catalysis.

Belongs to the radical SAM superfamily. RlmN family. [4Fe-4S] cluster is required as a cofactor.

It localises to the cytoplasm. The catalysed reaction is adenosine(2503) in 23S rRNA + 2 reduced [2Fe-2S]-[ferredoxin] + 2 S-adenosyl-L-methionine = 2-methyladenosine(2503) in 23S rRNA + 5'-deoxyadenosine + L-methionine + 2 oxidized [2Fe-2S]-[ferredoxin] + S-adenosyl-L-homocysteine. The enzyme catalyses adenosine(37) in tRNA + 2 reduced [2Fe-2S]-[ferredoxin] + 2 S-adenosyl-L-methionine = 2-methyladenosine(37) in tRNA + 5'-deoxyadenosine + L-methionine + 2 oxidized [2Fe-2S]-[ferredoxin] + S-adenosyl-L-homocysteine. Its function is as follows. Specifically methylates position 2 of adenine 2503 in 23S rRNA and position 2 of adenine 37 in tRNAs. m2A2503 modification seems to play a crucial role in the proofreading step occurring at the peptidyl transferase center and thus would serve to optimize ribosomal fidelity. The protein is Dual-specificity RNA methyltransferase RlmN of Nitratiruptor sp. (strain SB155-2).